A 224-amino-acid polypeptide reads, in one-letter code: UPF0758 protein Rpic_2712 (224 aa).

Positions 102–224 constitute an MPN domain; the sequence is TFESAQSVKD…VYGFLEHGKM (123 aa). Zn(2+)-binding residues include H173, H175, and D186. Residues 173 to 186 carry the JAMM motif motif; the sequence is HNHPTGNTEPSESD.

This sequence belongs to the UPF0758 family.

The protein is UPF0758 protein Rpic_2712 of Ralstonia pickettii (strain 12J).